A 228-amino-acid polypeptide reads, in one-letter code: Triosephosphate isomerase (228 aa).

Residue Asn-11–Lys-13 coordinates substrate. His-95 (electrophile) is an active-site residue. The active-site Proton acceptor is Glu-143. Residues Ile-148, Gly-183, and Ala-204–Ser-205 contribute to the substrate site.

Belongs to the triosephosphate isomerase family. Homotetramer; dimer of dimers.

It localises to the cytoplasm. It catalyses the reaction D-glyceraldehyde 3-phosphate = dihydroxyacetone phosphate. The protein operates within carbohydrate biosynthesis; gluconeogenesis. It functions in the pathway carbohydrate degradation; glycolysis; D-glyceraldehyde 3-phosphate from glycerone phosphate: step 1/1. In terms of biological role, involved in the gluconeogenesis. Catalyzes stereospecifically the conversion of dihydroxyacetone phosphate (DHAP) to D-glyceraldehyde-3-phosphate (G3P). The polypeptide is Triosephosphate isomerase (Pyrococcus horikoshii (strain ATCC 700860 / DSM 12428 / JCM 9974 / NBRC 100139 / OT-3)).